Consider the following 93-residue polypeptide: Large ribosomal subunit protein uL23 (93 aa).

It belongs to the universal ribosomal protein uL23 family. Part of the 50S ribosomal subunit. Contacts protein L29, and trigger factor when it is bound to the ribosome.

In terms of biological role, one of the early assembly proteins it binds 23S rRNA. One of the proteins that surrounds the polypeptide exit tunnel on the outside of the ribosome. Forms the main docking site for trigger factor binding to the ribosome. The protein is Large ribosomal subunit protein uL23 of Sulfurovum sp. (strain NBC37-1).